A 197-amino-acid chain; its full sequence is HTH-type transcriptional repressor BdcR (197 aa).

The HTH tetR-type domain maps to 15–75 (RFAPEQAISA…RVLNEYVGTE (61 aa)). A DNA-binding region (H-T-H motif) is located at residues 38-57 (SVAEVTDYLGINPPSLYAAF).

Functionally, negatively regulates expression of bdcA. The protein is HTH-type transcriptional repressor BdcR (bdcR) of Escherichia coli (strain K12).